A 517-amino-acid polypeptide reads, in one-letter code: Legumin A (517 aa).

A signal peptide spans 1-21 (MAKLLALSLSFCFLLLGGCFA). Intrachain disulfides connect cysteine 31-cysteine 64 and cysteine 107-cysteine 339. The Cupin type-1 1 domain occupies 36 to 232 (LDALEPDNRI…AFNVNRHIVD (197 aa)). Positions 249–335 (VKGGLSIISP…SRRQGDNGLE (87 aa)) are disordered. Residues 345–494 (LNIGPSSSPD…TFNLQRNEAR (150 aa)) form the Cupin type-1 2 domain.

The protein belongs to the 11S seed storage protein (globulins) family. As to quaternary structure, hexamer; each subunit is composed of an acidic and a basic chain derived from a single precursor and linked by a disulfide bond.

This protein found in the seeds of many leguminous and non-leguminous plants is the source of sulfur-containing amino acids in seed meals. This is Legumin A (LEGA) from Pisum sativum (Garden pea).